The sequence spans 428 residues: D-serine dehydratase (428 aa).

An N6-(pyridoxal phosphate)lysine modification is found at lysine 57. Pyridoxal 5'-phosphate-binding residues include tyrosine 203, tyrosine 210, threonine 255, glycine 286, and asparagine 287. Positions 398 and 400 each coordinate Zn(2+).

The protein belongs to the DSD1 family. Homodimer. Pyridoxal 5'-phosphate is required as a cofactor. Zn(2+) serves as cofactor.

The catalysed reaction is D-serine = pyruvate + NH4(+). Its activity is regulated as follows. Sodium cyanoborohydride, N-ethylmaleimide, hydroxylamine, phenyhydrazin and EDTA are inhibitors of the catalytic activity. Its function is as follows. Catalyzes the conversion of D-serine to pyruvate and ammonia. May play a role in D-serine detoxification. The polypeptide is D-serine dehydratase (Saccharomyces cerevisiae (strain ATCC 204508 / S288c) (Baker's yeast)).